A 541-amino-acid polypeptide reads, in one-letter code: Solute carrier family 22 member 10 (541 aa).

The Cytoplasmic segment spans residues 1-15; sequence MAFEELLSQVGGLGR. The chain crosses the membrane as a helical span at residues 16–36; sequence FQMLHLVFILPSLMLLIPHIL. Residues 37–145 are Extracellular-facing; sequence LENFAAAIPG…DLVCDYQSLK (109 aa). 2 N-linked (GlcNAc...) asparagine glycosylation sites follow: Asn56 and Asn102. Residues 146–166 form a helical membrane-spanning segment; sequence SVVQFLLLTGMLVGGIIGGHV. Residues 167 to 193 are Cytoplasmic-facing; the sequence is SDRFGRRFILRWCLLQLAITDTCAAFA. The chain crosses the membrane as a helical span at residues 194–214; that stretch reads PTFPVYCVLRFLAGFSSMIII. Residues 215–230 lie on the Extracellular side of the membrane; that stretch reads SNNSLPITEWIRPNSK. A helical transmembrane segment spans residues 231–251; it reads ALVVILSSGALSIGQIILGGL. The Cytoplasmic segment spans residues 252-259; it reads AYVFRDWQ. The helical transmembrane segment at 260–280 threads the bilayer; sequence TLHVVASVPFFVFFLLSRWLV. The Extracellular portion of the chain corresponds to 281–349; sequence ESARWLIITN…LFRNPSMRKR (69 aa). The chain crosses the membrane as a helical span at residues 350-370; it reads ICILVFLRFANTIPFYGTMVN. Over 371–377 the chain is Cytoplasmic; that stretch reads LQHVGSN. A helical membrane pass occupies residues 378 to 398; that stretch reads IFLLQVLYGAVALIVRCLALL. The Extracellular portion of the chain corresponds to 399-406; the sequence is TLNHMGRR. Residues 407-427 traverse the membrane as a helical segment; it reads ISQILFMFLVGLSILANTFVP. Topologically, residues 428 to 436 are cytoplasmic; it reads KEMQTLRVA. A helical membrane pass occupies residues 437-457; that stretch reads LACLGIGCSAATFSSVAVHFI. Over 458–472 the chain is Extracellular; that stretch reads ELIPTVLRARASGID. The helical transmembrane segment at 473–493 threads the bilayer; that stretch reads LTASRIGAALAPLLMTLTVFF. The Cytoplasmic segment spans residues 494–495; that stretch reads TT. Residues 496-516 traverse the membrane as a helical segment; the sequence is LPWIIYGIFPIIGGLIVFLLP. The Extracellular segment spans residues 517-541; it reads ETKNLPLPDTIKDVENQKKNLKEKA.

The protein belongs to the major facilitator (TC 2.A.1) superfamily. Organic cation transporter (TC 2.A.1.19) family. In terms of tissue distribution, detected in fetal and adult liver, and in adult kidney.

The protein resides in the membrane. The sequence is that of Solute carrier family 22 member 10 (SLC22A10) from Homo sapiens (Human).